Here is a 215-residue protein sequence, read N- to C-terminus: Pyridoxine/pyridoxamine 5'-phosphate oxidase (215 aa).

Substrate is bound by residues R9–Y12 and K69. Residues R64–K69, F79–T80, K86, and Q108 contribute to the FMN site. Substrate-binding residues include Y126, R130, and S134. FMN is bound by residues Q143 to S144 and W188. Residue R194 to H196 coordinates substrate. R198 contributes to the FMN binding site.

The protein belongs to the pyridoxamine 5'-phosphate oxidase family. In terms of assembly, homodimer. The cofactor is FMN.

The catalysed reaction is pyridoxamine 5'-phosphate + O2 + H2O = pyridoxal 5'-phosphate + H2O2 + NH4(+). It catalyses the reaction pyridoxine 5'-phosphate + O2 = pyridoxal 5'-phosphate + H2O2. The protein operates within cofactor metabolism; pyridoxal 5'-phosphate salvage; pyridoxal 5'-phosphate from pyridoxamine 5'-phosphate: step 1/1. It functions in the pathway cofactor metabolism; pyridoxal 5'-phosphate salvage; pyridoxal 5'-phosphate from pyridoxine 5'-phosphate: step 1/1. In terms of biological role, catalyzes the oxidation of either pyridoxine 5'-phosphate (PNP) or pyridoxamine 5'-phosphate (PMP) into pyridoxal 5'-phosphate (PLP). The polypeptide is Pyridoxine/pyridoxamine 5'-phosphate oxidase (Pseudomonas entomophila (strain L48)).